The chain runs to 367 residues: Endopolygalacturonase B (367 aa).

A signal peptide spans 1–17; the sequence is MHFQLLGLAALGSLAAA. Residues 18–30 constitute a propeptide that is removed on maturation; it reads APAPSRTSELVER. A disulfide bridge connects residues Cys34 and Cys49. 5 PbH1 repeats span residues 161-191, 192-213, 214-234, 243-264, and 272-294; these read GNDVHLTDITIDNSDGDNNGGHNTDAFDVSE, SNGVYITGANVKNQDDCLAINS, GENIEFTGATCSGGHGISIGS, VKNVKVADSTVVDSDNGIRIKT, and VSGVTYENITLKNIKKNGIVIEQ. Residue Asp206 is the Proton donor of the active site. The cysteines at positions 208 and 224 are disulfide-linked. His228 is an active-site residue. Residue Asn279 is glycosylated (N-linked (GlcNAc...) asparagine). 2 disulfide bridges follow: Cys334–Cys339 and Cys358–Cys367.

This sequence belongs to the glycosyl hydrolase 28 family.

The protein localises to the secreted. The catalysed reaction is (1,4-alpha-D-galacturonosyl)n+m + H2O = (1,4-alpha-D-galacturonosyl)n + (1,4-alpha-D-galacturonosyl)m.. In terms of biological role, involved in maceration and soft-rotting of plant tissue. Hydrolyzes the 1,4-alpha glycosidic bonds of de-esterified pectate in the smooth region of the plant cell wall. This Aspergillus flavus (strain ATCC MYA-384 / AF70) protein is Endopolygalacturonase B (pgaB).